A 152-amino-acid polypeptide reads, in one-letter code: Large ribosomal subunit protein bL9 (152 aa).

The protein belongs to the bacterial ribosomal protein bL9 family.

In terms of biological role, binds to the 23S rRNA. In Acaryochloris marina (strain MBIC 11017), this protein is Large ribosomal subunit protein bL9.